Here is a 201-residue protein sequence, read N- to C-terminus: Type III effector protein HopBF1 (201 aa).

6 residues coordinate ATP: Ser39, Gln40, Lys41, Asp106, Ile108, and Asp113. Asp154 is an active-site residue. Gln156 lines the ATP pocket.

It belongs to the HopBF1 family.

The protein resides in the secreted. Its subcellular location is the host cell. It catalyses the reaction L-seryl-[protein] + ATP = O-phospho-L-seryl-[protein] + ADP + H(+). Functionally, effector protein that targets and inactivates the plant molecular chaperone HSP90 during infection. HopBF1 is recognized by HSP90 as a host client. As a result, HopBF1 phosphorylates HSP90, leading to the inactivation of the HSP90 ATPase activity and chaperone function. Phosphorylation of HSP90 prevents activation of immune receptors that trigger the hypersensitive response in plants. HopBF1 is sufficient to cause severe disease symptoms in plants infected with P.syringae. In vitro, can phosphorylate the recombinant yeast HSP82 (HSP90) on Ser-99, Triticum aestivum (wheat) HSP90 and human HSP 90-beta, but not the prokaryotic HSP90 orthologs, HtpG from E.coli and P.syringae. Does not act on generic protein kinase substrates such as casein and myelin basic protein, as well as the yeast HSP70s and Bip chaperones. The protein is Type III effector protein HopBF1 of Pseudomonas syringae pv. syringae (strain FF5).